We begin with the raw amino-acid sequence, 324 residues long: Biotin synthase (324 aa).

Residues 42–269 form the Radical SAM core domain; it reads NEVQISSLLN…KSYIRLAAGR (228 aa). Positions 57, 61, and 64 each coordinate [4Fe-4S] cluster. 4 residues coordinate [2Fe-2S] cluster: C101, C132, C192, and R264.

Belongs to the radical SAM superfamily. Biotin synthase family. As to quaternary structure, homodimer. The cofactor is [4Fe-4S] cluster. [2Fe-2S] cluster serves as cofactor.

It catalyses the reaction (4R,5S)-dethiobiotin + (sulfur carrier)-SH + 2 reduced [2Fe-2S]-[ferredoxin] + 2 S-adenosyl-L-methionine = (sulfur carrier)-H + biotin + 2 5'-deoxyadenosine + 2 L-methionine + 2 oxidized [2Fe-2S]-[ferredoxin]. Its pathway is cofactor biosynthesis; biotin biosynthesis; biotin from 7,8-diaminononanoate: step 2/2. Its function is as follows. Catalyzes the conversion of dethiobiotin (DTB) to biotin by the insertion of a sulfur atom into dethiobiotin via a radical-based mechanism. This chain is Biotin synthase, found in Ehrlichia canis (strain Jake).